Here is a 96-residue protein sequence, read N- to C-terminus: MQALIQISDKQYLVKTGDKLFIPHQNAEVGNVIDLKPLAQIDQEKTSIEPSGNVQLKVLEHLKDEKVIVFKKKRRKRYQKRNGHRQLMTQVEVLSM.

It belongs to the bacterial ribosomal protein bL21 family. In terms of assembly, part of the 50S ribosomal subunit. Contacts protein L20.

In terms of biological role, this protein binds to 23S rRNA in the presence of protein L20. This is Large ribosomal subunit protein bL21 from Chlorobium phaeobacteroides (strain BS1).